The primary structure comprises 314 residues: Vacuolar membrane protein FOSTERSB_4073 (314 aa).

The segment at 32–60 is disordered; that stretch reads KPTSSVVSETSSKSLPSLTSSAFSTSSGA. The chain crosses the membrane as a helical span at residues 93-113; sequence VYIAVGAVIGAIFISILIWWL. A phosphoserine mark is found at Ser-148, Ser-254, and Ser-274. Residues 240–309 are disordered; it reads EERKLNLNRP…PSMFLDDVLN (70 aa). Residues 254–269 are compositionally biased toward basic and acidic residues; that stretch reads SPERKEKKINSMEGYH.

The protein belongs to the PRM5 family.

The protein localises to the vacuole membrane. The protein is Vacuolar membrane protein FOSTERSB_4073 of Saccharomyces cerevisiae (strain FostersB) (Baker's yeast).